Here is an 89-residue protein sequence, read N- to C-terminus: Small ribosomal subunit protein uS15 (89 aa).

It belongs to the universal ribosomal protein uS15 family. As to quaternary structure, part of the 30S ribosomal subunit. Forms a bridge to the 50S subunit in the 70S ribosome, contacting the 23S rRNA.

Functionally, one of the primary rRNA binding proteins, it binds directly to 16S rRNA where it helps nucleate assembly of the platform of the 30S subunit by binding and bridging several RNA helices of the 16S rRNA. Its function is as follows. Forms an intersubunit bridge (bridge B4) with the 23S rRNA of the 50S subunit in the ribosome. In Elusimicrobium minutum (strain Pei191), this protein is Small ribosomal subunit protein uS15.